The following is a 408-amino-acid chain: Solute carrier family 35 member F1 (408 aa).

The interval 1–20 is disordered; the sequence is MIPPEPPQPQLQPPPPPAPP. Helical transmembrane passes span 60-80, 94-114, 129-147, 159-179, 186-206, 221-241, 247-267, 284-304, 311-331, and 335-355; these read MLIS…IGLT, VFQS…TLAV, WWKY…YLVV, QLLD…FLLI, FIGI…DVLV, LLVL…ESII, VEFL…QLAI, LLYV…PVVI, SVNL…LFLF, and FSGL…LYSS.

The protein belongs to the SLC35F solute transporter family.

Its subcellular location is the cytoplasmic vesicle. It is found in the secretory vesicle. The protein resides in the synaptic vesicle membrane. Functionally, putative solute transporter. The polypeptide is Solute carrier family 35 member F1 (Slc35f1) (Mus musculus (Mouse)).